Reading from the N-terminus, the 374-residue chain is Beta sliding clamp (374 aa).

This sequence belongs to the beta sliding clamp family. Forms a ring-shaped head-to-tail homodimer around DNA which binds and tethers DNA polymerases and other proteins to the DNA. The DNA replisome complex has a single clamp-loading complex (3 tau and 1 each of delta, delta', psi and chi subunits) which binds 3 Pol III cores (1 core on the leading strand and 2 on the lagging strand) each with a beta sliding clamp dimer. Additional proteins in the replisome are other copies of gamma, psi and chi, Ssb, DNA helicase and RNA primase.

It localises to the cytoplasm. Confers DNA tethering and processivity to DNA polymerases and other proteins. Acts as a clamp, forming a ring around DNA (a reaction catalyzed by the clamp-loading complex) which diffuses in an ATP-independent manner freely and bidirectionally along dsDNA. Initially characterized for its ability to contact the catalytic subunit of DNA polymerase III (Pol III), a complex, multichain enzyme responsible for most of the replicative synthesis in bacteria; Pol III exhibits 3'-5' exonuclease proofreading activity. The beta chain is required for initiation of replication as well as for processivity of DNA replication. The chain is Beta sliding clamp (dnaN) from Helicobacter pylori (strain J99 / ATCC 700824) (Campylobacter pylori J99).